Here is a 284-residue protein sequence, read N- to C-terminus: NAD kinase (284 aa).

Residue D70 is the Proton acceptor of the active site. NAD(+) is bound by residues D70–G71, N139–E140, K167, D169, L177, T180–S185, and Q236.

This sequence belongs to the NAD kinase family. A divalent metal cation serves as cofactor.

It localises to the cytoplasm. It catalyses the reaction NAD(+) + ATP = ADP + NADP(+) + H(+). Functionally, involved in the regulation of the intracellular balance of NAD and NADP, and is a key enzyme in the biosynthesis of NADP. Catalyzes specifically the phosphorylation on 2'-hydroxyl of the adenosine moiety of NAD to yield NADP. In Helicobacter pylori (strain ATCC 700392 / 26695) (Campylobacter pylori), this protein is NAD kinase.